We begin with the raw amino-acid sequence, 483 residues long: Serine/threonine-protein kinase BSK4 (483 aa).

Gly-2 is lipidated: N-myristoyl glycine. Positions 56-322 constitute a Protein kinase domain; the sequence is ENVVSEHGET…DTEVLSHVLM (267 aa). ATP contacts are provided by residues 62–70 and Lys-84; that span reads HGETAPNVV. Catalysis depends on Asp-178, which acts as the Proton acceptor.

This sequence belongs to the protein kinase superfamily. Ser/Thr protein kinase family.

The protein localises to the cell membrane. The enzyme catalyses L-seryl-[protein] + ATP = O-phospho-L-seryl-[protein] + ADP + H(+). The catalysed reaction is L-threonyl-[protein] + ATP = O-phospho-L-threonyl-[protein] + ADP + H(+). Probable serine/threonine kinase that acts as a positive regulator of brassinosteroid (BR) signaling downstream of the receptor kinase BRI1. Functions redundantly with BSK3, BSK6, BSK7 and BSK8. This chain is Serine/threonine-protein kinase BSK4, found in Arabidopsis thaliana (Mouse-ear cress).